A 338-amino-acid polypeptide reads, in one-letter code: Acyl-CoA:acyl-CoA alkyltransferase (338 aa).

Positions 18 and 56 each coordinate Mn(2+). Glu-97 acts as the Proton acceptor in catalysis. Cys-123 functions as the Acyl-thioester intermediate in the catalytic mechanism.

It belongs to the thiolase-like superfamily. OleA family. Homodimer. Weakly associates with the OleBCD complex.

The protein resides in the cytoplasm. It catalyses the reaction a 1,2-saturated acyl-CoA + an acyl-CoA + H2O = an (R)-2-alkyl-3-oxoalkanoate + 2 CoA + H(+). With respect to regulation, inhibited by cerulenin. Involved in olefin biosynthesis. Catalyzes a non-decarboxylative head-to-head Claisen condensation of two acyl-CoA molecules, generating an (R)-2-alkyl-3-oxoalkanoate. Is active with fatty acyl-CoA substrates that ranged from C(8) to C(16) in length, and is the most active with palmitoyl-CoA and myristoyl-CoA. This chain is Acyl-CoA:acyl-CoA alkyltransferase, found in Xanthomonas campestris pv. campestris (strain ATCC 33913 / DSM 3586 / NCPPB 528 / LMG 568 / P 25).